A 391-amino-acid polypeptide reads, in one-letter code: GTPase HflX (391 aa).

The tract at residues 162 to 181 is disordered; that stretch reads LAQQRGGAKGTRGASRGAGE. Positions 222-391 constitute a Hflx-type G domain; that stretch reads KIGAIVGYTN…KITDIIIFDK (170 aa). Residues 228–235, 253–257, 278–281, 344–347, and 369–371 contribute to the GTP site; these read GYTNAGKS, FATLD, DTVG, NKMD, and SVT. Ser-235 and Thr-255 together coordinate Mg(2+).

It belongs to the TRAFAC class OBG-HflX-like GTPase superfamily. HflX GTPase family. Monomer. Associates with the 50S ribosomal subunit. The cofactor is Mg(2+).

Its subcellular location is the cytoplasm. In terms of biological role, GTPase that associates with the 50S ribosomal subunit and may have a role during protein synthesis or ribosome biogenesis. The chain is GTPase HflX from Treponema denticola (strain ATCC 35405 / DSM 14222 / CIP 103919 / JCM 8153 / KCTC 15104).